Consider the following 692-residue polypeptide: Elongation factor G (692 aa).

The 275-residue stretch at 8 to 282 (AKTRNIGIMA…AVIAYLPSPL (275 aa)) folds into the tr-type G domain. GTP-binding positions include 17–24 (AHVDAGKT), 81–85 (DTPGH), and 135–138 (NKMD).

Belongs to the TRAFAC class translation factor GTPase superfamily. Classic translation factor GTPase family. EF-G/EF-2 subfamily.

It localises to the cytoplasm. Catalyzes the GTP-dependent ribosomal translocation step during translation elongation. During this step, the ribosome changes from the pre-translocational (PRE) to the post-translocational (POST) state as the newly formed A-site-bound peptidyl-tRNA and P-site-bound deacylated tRNA move to the P and E sites, respectively. Catalyzes the coordinated movement of the two tRNA molecules, the mRNA and conformational changes in the ribosome. The polypeptide is Elongation factor G (Streptococcus pyogenes serotype M49 (strain NZ131)).